The sequence spans 220 residues: Flavin-dependent thymidylate synthase (220 aa).

The ThyX domain occupies 1–208; it reads MKIDILDKGF…PWTFEAFLKY (208 aa). FAD contacts are provided by residues Thr55, 78–80, and Glu86; that span reads RHR. Residues 75-78, 86-90, and Arg147 each bind dUMP; these read QWFR and ELSGR. The ThyX motif motif lies at 78-88; sequence RHRIASYNELS. FAD contacts are provided by residues 163-165 and Asn169; that span reads NAR. Arg174 contributes to the dUMP binding site. Residue Arg174 is the Involved in ionization of N3 of dUMP, leading to its activation of the active site.

It belongs to the thymidylate synthase ThyX family. In terms of assembly, homotetramer. Requires FAD as cofactor.

It catalyses the reaction dUMP + (6R)-5,10-methylene-5,6,7,8-tetrahydrofolate + NADPH + H(+) = dTMP + (6S)-5,6,7,8-tetrahydrofolate + NADP(+). The protein operates within pyrimidine metabolism; dTTP biosynthesis. Functionally, catalyzes the reductive methylation of 2'-deoxyuridine-5'-monophosphate (dUMP) to 2'-deoxythymidine-5'-monophosphate (dTMP) while utilizing 5,10-methylenetetrahydrofolate (mTHF) as the methyl donor, and NADPH and FADH(2) as the reductant. The chain is Flavin-dependent thymidylate synthase from Thermotoga sp. (strain RQ2).